The sequence spans 994 residues: Bifunctional glutamine synthetase adenylyltransferase/adenylyl-removing enzyme (994 aa).

The segment at 1–487 (MVVTKLATQR…LHTKLFYQPL (487 aa)) is adenylyl removase. The interval 492–994 (GPTGLEIAHG…KAVVRKVFGS (503 aa)) is adenylyl transferase.

It belongs to the GlnE family. Requires Mg(2+) as cofactor.

The enzyme catalyses [glutamine synthetase]-O(4)-(5'-adenylyl)-L-tyrosine + phosphate = [glutamine synthetase]-L-tyrosine + ADP. It catalyses the reaction [glutamine synthetase]-L-tyrosine + ATP = [glutamine synthetase]-O(4)-(5'-adenylyl)-L-tyrosine + diphosphate. In terms of biological role, involved in the regulation of glutamine synthetase GlnA, a key enzyme in the process to assimilate ammonia. When cellular nitrogen levels are high, the C-terminal adenylyl transferase (AT) inactivates GlnA by covalent transfer of an adenylyl group from ATP to specific tyrosine residue of GlnA, thus reducing its activity. Conversely, when nitrogen levels are low, the N-terminal adenylyl removase (AR) activates GlnA by removing the adenylyl group by phosphorolysis, increasing its activity. The regulatory region of GlnE binds the signal transduction protein PII (GlnB) which indicates the nitrogen status of the cell. This is Bifunctional glutamine synthetase adenylyltransferase/adenylyl-removing enzyme from Mycobacterium bovis (strain ATCC BAA-935 / AF2122/97).